The sequence spans 595 residues: Aspartate--tRNA ligase (595 aa).

Glu-173 provides a ligand contact to L-aspartate. The aspartate stretch occupies residues 197-200; that stretch reads QLFK. Residue Arg-219 participates in L-aspartate binding. ATP-binding positions include 219–221 and Gln-228; that span reads RDE. His-449 is a binding site for L-aspartate. Position 483 (Glu-483) interacts with ATP. Arg-490 contacts L-aspartate. 535–538 is a binding site for ATP; the sequence is GLDR.

This sequence belongs to the class-II aminoacyl-tRNA synthetase family. Type 1 subfamily. As to quaternary structure, homodimer.

The protein localises to the cytoplasm. It catalyses the reaction tRNA(Asp) + L-aspartate + ATP = L-aspartyl-tRNA(Asp) + AMP + diphosphate. Its function is as follows. Catalyzes the attachment of L-aspartate to tRNA(Asp) in a two-step reaction: L-aspartate is first activated by ATP to form Asp-AMP and then transferred to the acceptor end of tRNA(Asp). This is Aspartate--tRNA ligase from Shewanella woodyi (strain ATCC 51908 / MS32).